The primary structure comprises 79 residues: Acyl carrier protein (79 aa).

The region spanning A2 to V77 is the Carrier domain. An O-(pantetheine 4'-phosphoryl)serine modification is found at S37.

The protein belongs to the acyl carrier protein (ACP) family. In terms of processing, 4'-phosphopantetheine is transferred from CoA to a specific serine of apo-ACP by AcpS. This modification is essential for activity because fatty acids are bound in thioester linkage to the sulfhydryl of the prosthetic group.

It localises to the cytoplasm. Its pathway is lipid metabolism; fatty acid biosynthesis. Its function is as follows. Carrier of the growing fatty acid chain in fatty acid biosynthesis. The sequence is that of Acyl carrier protein from Gemmatimonas aurantiaca (strain DSM 14586 / JCM 11422 / NBRC 100505 / T-27).